Consider the following 233-residue polypeptide: Somatolactin (233 aa).

Residues 1–24 form the signal peptide; sequence MNMMQVMQSVVWAVLLWPCLVSLG. Disulfide bonds link cysteine 29–cysteine 39, cysteine 89–cysteine 205, and cysteine 222–cysteine 230.

This sequence belongs to the somatotropin/prolactin family. Pituitary gland.

It is found in the secreted. In terms of biological role, may be associated with ion regulation and reproduction. The sequence is that of Somatolactin from Oncorhynchus keta (Chum salmon).